A 578-amino-acid chain; its full sequence is Membrane protein insertase YidC (578 aa).

The helical transmembrane segment at 3–23 threads the bilayer; that stretch reads IQRSILIVALAVVSYLLVLQW. The tract at residues 34-72 is disordered; it reads AASASMNTTQGLPDTPSASGTSSDVPTAQSSAAGSEAAD. A compositionally biased stretch (polar residues) spans 37–66; the sequence is ASMNTTQGLPDTPSASGTSSDVPTAQSSAA. Transmembrane regions (helical) follow at residues 361–381, 387–407, 457–477, 500–520, and 535–555; these read LELT…FWLL, LIGN…LAFF, LGGC…YWVL, PFFI…MLNP, and PIIF…YWVV.

Belongs to the OXA1/ALB3/YidC family. Type 1 subfamily. Interacts with the Sec translocase complex via SecD. Specifically interacts with transmembrane segments of nascent integral membrane proteins during membrane integration.

It localises to the cell inner membrane. Functionally, required for the insertion and/or proper folding and/or complex formation of integral membrane proteins into the membrane. Involved in integration of membrane proteins that insert both dependently and independently of the Sec translocase complex, as well as at least some lipoproteins. Aids folding of multispanning membrane proteins. The protein is Membrane protein insertase YidC of Pseudomonas aeruginosa (strain ATCC 15692 / DSM 22644 / CIP 104116 / JCM 14847 / LMG 12228 / 1C / PRS 101 / PAO1).